The chain runs to 504 residues: Fibroblast growth factor receptor-like 1 (504 aa).

The signal sequence occupies residues 1–24; it reads MTPSPLLLLLLPPLLLGAFPPAAA. Over 25–378 the chain is Extracellular; that stretch reads ARGPPKMADK…SSSATSLPWP (354 aa). Residues 29-115 form the Ig-like C2-type 1 domain; sequence PKMADKVVPR…GSLSVNYTLV (87 aa). A disulfide bridge connects residues cysteine 51 and cysteine 99. N-linked (GlcNAc...) asparagine glycosylation is present at asparagine 111. Positions 123 to 155 are disordered; that stretch reads GKESLGPDSSSGGQEDPASQQWARPRFTQPSKM. The span at 129 to 144 shows a compositional bias: polar residues; sequence PDSSSGGQEDPASQQW. Ig-like C2-type domains are found at residues 147–237 and 246–354; these read PRFT…YKVD and PVLT…AFLT. Cysteine 172 and cysteine 221 are disulfide-bonded. 3 N-linked (GlcNAc...) asparagine glycosylation sites follow: asparagine 231, asparagine 255, and asparagine 293. Cysteines 268 and 338 form a disulfide. Residues 379-399 traverse the membrane as a helical segment; the sequence is VVIGIPAGAVFILGTLLLWLC. The Cytoplasmic portion of the chain corresponds to 400–504; that stretch reads QAQKKPCTPA…KVHQHIHYQC (105 aa). A compositionally biased stretch (pro residues) spans 407–418; it reads TPAPAPPLPGHR. The disordered stretch occupies residues 407–435; it reads TPAPAPPLPGHRPPGTARDRSGDKDLPSL. Basic and acidic residues predominate over residues 423-432; it reads ARDRSGDKDL.

Interacts with FGF2 with a low affinity. In terms of tissue distribution, expressed preferentially in cartilaginous tissues and pancreas. Highly expressed in the liver, kidney, heart, brain and skeletal muscle. Weakly expressed in the lung, small intestine and spleen.

The protein localises to the membrane. Has a negative effect on cell proliferation. This chain is Fibroblast growth factor receptor-like 1 (FGFRL1), found in Homo sapiens (Human).